The chain runs to 110 residues: Glycine cleavage system H-like protein (110 aa).

Residues 10-97 (VEKVGDLYVF…PEENWLFKLD (88 aa)) enclose the Lipoyl-binding domain. An ADP-ribosyl aspartic acid modification is found at Asp-27. An N6-lipoyllysine modification is found at Lys-56.

As to quaternary structure, lipoylated GcvH-L directly interacts with SAV0325, which reverses the SirTM-mediated mono-ADP-ribosylation of GcvH-L, and with the oxidoreductase SAV0322. Post-translationally, is lipoylated on K-56 by LplA2 (SAV0327) and then mono-ADP-ribosylated, probably on D-27, by SirTM (SAV0326). The mono-ADP-ribosylation state of GcvH-L might regulate the availability of the lipoyl moiety for redox reactions; ADP-ribosylation would inhibit the interaction of the oxidoreductase with GcvH-L when it is not required, thus ADP-ribosylation of GcvH-L might be acting to keep the response 'off' under non-stress conditions.

May act as a carrier protein for the ROS scavenging lipoyl moiety and/or as a substrate for oxidoreductases such as SAV0322 and SAV0323. This Staphylococcus aureus (strain Mu50 / ATCC 700699) protein is Glycine cleavage system H-like protein.